Here is an 883-residue protein sequence, read N- to C-terminus: MADKKTVTPEEKKLVAEKHVDELVQKALVALEEMRKLDQEQVDYIVAKASVAALDAHGELALHAFEETGRGVFEDKATKNLFACEHVVNNMRHTKTVGVIEEDDVTGLTLIAEPVGVVCGITPTTNPTSTAIFKSLISLKTRNPIVFAFHPSAQESSAHAARIVRDAAIAAGAPENCVQWITQPSMEATSALMNHEGVATILATGGNAMVKAAYSCGKPALGVGAGNVPAYVEKSANIRQAAHDIVMSKSFDNGMVCASEQAVIIDKEIYDEFVAEFKSYHTYFVNKKEKALLEEFCFGVKANSKNCAGAKLNADIVGKPATWIAEQAGFTVPEGTNILAAECKEVGENEPLTREKLSPVIAVLKSESREDGITKARQMVEFNGLGHSAAIHTADEELTKEFGKAVKAIRVICNSPSTFGGIGDVYNAFLPSLTLGCGSYGRNSVGDNVSAINLLNIKKVGRRRNNMQWMKLPSKTYFERDSIQYLQKCRDVERVMIVTDHAMVELGFLDRIIEQLDLRRNKVVYQIFADVEPDPDITTVNRGTEIMRAFKPDTIIALGGGSPMDAAKVMWLFYEQPEVDFRDLVQKFMDIRKRAFKFPLLGKKTKFIAIPTTSGTGSEVTPFAVISDKANNRKYPIADYSLTPTVAIVDPALVLTVPGFVAADTGMDVLTHATEAYVSQMASDYTDGLALQAIKLVFENLESSVKNADFHSREKMHNASTIAGMAFANAFLGISHSMAHKIGAQFHTIHGRTNAILLPYVIRYNGTRPAKTATWPKYNYYRADEKYQDIARMLGLPASTPEEGVESYAKAVYELGERIGIQMNFRDQGIDEKEWKEHSRKLAFLAYEDQCSPANPRLPMVDHMQEIIEDAYYGYKERPGRRK.

Residues 13-456 form an aldehyde dehydrogenase region; the sequence is KLVAEKHVDE…DNVSAINLLN (444 aa). NAD(+) is bound by residues 121–126, Gly206, and Gly224; that span reads ITPTTN. Cys257 acts as the Nucleophile in catalysis. NAD(+) is bound by residues Glu355, Leu435, and 438–443; that span reads GSYGRN. Residues 457–464 form a linker region; the sequence is IKKVGRRR. NAD(+)-binding positions include Asp500, Asp534, 561–565, 612–613, Val625, Lys634, and Leu653; these read GSPMD and TT. Residues Asp668, His672, His736, and His750 each coordinate Fe cation.

In the N-terminal section; belongs to the aldehyde dehydrogenase family. The protein in the C-terminal section; belongs to the iron-containing alcohol dehydrogenase family. Fe(2+) is required as a cofactor.

The enzyme catalyses ethanol + NAD(+) = acetaldehyde + NADH + H(+). It carries out the reaction an aldehyde + NAD(+) + H2O = a carboxylate + NADH + 2 H(+). In terms of biological role, has alcohol dehydrogenase activity. Has aldehyde dehydrogenase activity. May play a role in enhancing virulence in mice. May be considered a potential virulence factor. The sequence is that of Aldehyde-alcohol dehydrogenase from Streptococcus pneumoniae serotype 4 (strain ATCC BAA-334 / TIGR4).